The primary structure comprises 225 residues: NAD(P)H-quinone oxidoreductase subunit K, chloroplastic (225 aa).

The [4Fe-4S] cluster site is built by C43, C44, C108, and C139.

The protein belongs to the complex I 20 kDa subunit family. NDH is composed of at least 16 different subunits, 5 of which are encoded in the nucleus. It depends on [4Fe-4S] cluster as a cofactor.

The protein localises to the plastid. The protein resides in the chloroplast thylakoid membrane. It carries out the reaction a plastoquinone + NADH + (n+1) H(+)(in) = a plastoquinol + NAD(+) + n H(+)(out). The catalysed reaction is a plastoquinone + NADPH + (n+1) H(+)(in) = a plastoquinol + NADP(+) + n H(+)(out). Its function is as follows. NDH shuttles electrons from NAD(P)H:plastoquinone, via FMN and iron-sulfur (Fe-S) centers, to quinones in the photosynthetic chain and possibly in a chloroplast respiratory chain. The immediate electron acceptor for the enzyme in this species is believed to be plastoquinone. Couples the redox reaction to proton translocation, and thus conserves the redox energy in a proton gradient. In Lactuca sativa (Garden lettuce), this protein is NAD(P)H-quinone oxidoreductase subunit K, chloroplastic.